We begin with the raw amino-acid sequence, 724 residues long: Putative methyltransferase NSUN7 (724 aa).

Catalysis depends on Cys444, which acts as the Nucleophile. 3 disordered regions span residues Lys542 to Asp574, Ile595 to Val629, and Thr698 to Leu724. A compositionally biased stretch (basic residues) spans Thr543–Lys554. Residues His562 to Ala572 are compositionally biased toward basic and acidic residues. Positions Ile595 to Arg618 are enriched in polar residues.

It belongs to the class I-like SAM-binding methyltransferase superfamily. RsmB/NOP family. Expressed in testis.

May have S-adenosyl-L-methionine-dependent methyl-transferase activity. In Mus musculus (Mouse), this protein is Putative methyltransferase NSUN7 (Nsun7).